Reading from the N-terminus, the 253-residue chain is Ubiquinone biosynthesis O-methyltransferase (253 aa).

Positions 47, 78, 99, and 141 each coordinate S-adenosyl-L-methionine.

This sequence belongs to the methyltransferase superfamily. UbiG/COQ3 family.

The catalysed reaction is a 3-demethylubiquinol + S-adenosyl-L-methionine = a ubiquinol + S-adenosyl-L-homocysteine + H(+). It catalyses the reaction a 3-(all-trans-polyprenyl)benzene-1,2-diol + S-adenosyl-L-methionine = a 2-methoxy-6-(all-trans-polyprenyl)phenol + S-adenosyl-L-homocysteine + H(+). It functions in the pathway cofactor biosynthesis; ubiquinone biosynthesis. Functionally, O-methyltransferase that catalyzes the 2 O-methylation steps in the ubiquinone biosynthetic pathway. The sequence is that of Ubiquinone biosynthesis O-methyltransferase from Bradyrhizobium diazoefficiens (strain JCM 10833 / BCRC 13528 / IAM 13628 / NBRC 14792 / USDA 110).